The sequence spans 554 residues: uncharacterized protein (554 aa).

4 disordered regions span residues 1-127 (MTTH…NYND), 139-173 (IEDD…SKAG), 293-395 (NNNN…PLSE), and 416-509 (FGFS…RKIR). Low complexity-rich tracts occupy residues 9 to 30 (SSSN…NNNI), 46 to 55 (DPTSSSSPTN), and 63 to 125 (SNSN…LINY). Positions 139-153 (IEDDEEYEEIGDEES) are enriched in acidic residues. Over residues 164–173 (NDSLNGSKAG) the composition is skewed to polar residues. 3 stretches are compositionally biased toward low complexity: residues 293-387 (NNNN…CSSN), 416-449 (FGFS…SSIS), and 461-484 (SPPL…NNNH). Residues 485–508 (HNNHHQNHHHQNHNHQHHSKKRKI) are compositionally biased toward basic residues.

This is an uncharacterized protein from Dictyostelium discoideum (Social amoeba).